The chain runs to 345 residues: S-adenosylmethionine:tRNA ribosyltransferase-isomerase (345 aa).

This sequence belongs to the QueA family. Monomer.

It is found in the cytoplasm. The catalysed reaction is 7-aminomethyl-7-carbaguanosine(34) in tRNA + S-adenosyl-L-methionine = epoxyqueuosine(34) in tRNA + adenine + L-methionine + 2 H(+). It participates in tRNA modification; tRNA-queuosine biosynthesis. Transfers and isomerizes the ribose moiety from AdoMet to the 7-aminomethyl group of 7-deazaguanine (preQ1-tRNA) to give epoxyqueuosine (oQ-tRNA). This chain is S-adenosylmethionine:tRNA ribosyltransferase-isomerase, found in Rhodospirillum rubrum (strain ATCC 11170 / ATH 1.1.1 / DSM 467 / LMG 4362 / NCIMB 8255 / S1).